We begin with the raw amino-acid sequence, 423 residues long: Lysosomal acid phosphatase (423 aa).

Positions Met-1–Ala-30 are cleaved as a signal peptide. The Lumenal segment spans residues Arg-31–Glu-380. The active-site Nucleophile is His-42. Residues Asn-92, Asn-133, Asn-167, Asn-177, Asn-191, Asn-197, and Asn-267 are each glycosylated (N-linked (GlcNAc...) asparagine). Cystine bridges form between Cys-159–Cys-370, Cys-212–Cys-310, and Cys-345–Cys-349. The active-site Proton donor is the Asp-287. Residues Asn-322 and Asn-331 are each glycosylated (N-linked (GlcNAc...) asparagine). Residues Val-381–Thr-401 traverse the membrane as a helical segment. Over Val-402–Ala-423 the chain is Cytoplasmic.

This sequence belongs to the histidine acid phosphatase family. The membrane-bound form is converted to the soluble form by sequential proteolytic processing. First, the C-terminal cytoplasmic tail is removed. Cleavage by a lysosomal protease releases the soluble form in the lysosome lumen.

It is found in the lysosome membrane. The protein localises to the lysosome lumen. It carries out the reaction a phosphate monoester + H2O = an alcohol + phosphate. This is Lysosomal acid phosphatase (Acp2) from Rattus norvegicus (Rat).